The chain runs to 229 residues: Heptaprenylglyceryl phosphate synthase (229 aa).

A sn-glycerol 1-phosphate-binding site is contributed by lysine 12. Mg(2+)-binding residues include aspartate 14 and serine 40. Sn-glycerol 1-phosphate is bound by residues 159-164, glycine 189, and 209-210; these read YLEYSG and GN.

The protein belongs to the GGGP/HepGP synthase family. Group I subfamily. Homodimer. It depends on Mg(2+) as a cofactor.

It catalyses the reaction sn-glycerol 1-phosphate + all-trans-heptaprenyl diphosphate = 3-heptaprenyl-sn-glycero-1-phosphate + diphosphate. Its pathway is membrane lipid metabolism; glycerophospholipid metabolism. Functionally, prenyltransferase that catalyzes in vivo the transfer of the heptaprenyl moiety of heptaprenyl pyrophosphate (HepPP; 35 carbon atoms) to the C3 hydroxyl of sn-glycerol-1-phosphate (G1P), producing heptaprenylglyceryl phosphate (HepGP). This reaction is an ether-bond-formation step in the biosynthesis of archaea-type G1P-based membrane lipids found in Bacillales. The protein is Heptaprenylglyceryl phosphate synthase of Bacillus velezensis (strain DSM 23117 / BGSC 10A6 / LMG 26770 / FZB42) (Bacillus amyloliquefaciens subsp. plantarum).